Reading from the N-terminus, the 241-residue chain is Octanoyltransferase (241 aa).

Residues 38–227 (AGGPDTLLLL…AVCNALDGAL (190 aa)) form the BPL/LPL catalytic domain. Substrate is bound by residues 85-92 (RGGKITWH), 157-159 (AIG), and 170-172 (GFA). The active-site Acyl-thioester intermediate is the cysteine 188.

The protein belongs to the LipB family.

It is found in the cytoplasm. It carries out the reaction octanoyl-[ACP] + L-lysyl-[protein] = N(6)-octanoyl-L-lysyl-[protein] + holo-[ACP] + H(+). It participates in protein modification; protein lipoylation via endogenous pathway; protein N(6)-(lipoyl)lysine from octanoyl-[acyl-carrier-protein]: step 1/2. Functionally, catalyzes the transfer of endogenously produced octanoic acid from octanoyl-acyl-carrier-protein onto the lipoyl domains of lipoate-dependent enzymes. Lipoyl-ACP can also act as a substrate although octanoyl-ACP is likely to be the physiological substrate. In Mycobacterium ulcerans (strain Agy99), this protein is Octanoyltransferase.